The chain runs to 238 residues: tRNA (guanine-N(7)-)-methyltransferase (238 aa).

S-adenosyl-L-methionine is bound by residues Glu-62, Glu-87, Asp-119, and Asp-141. Asp-141 is an active-site residue. Residues Lys-145, Asp-177, and 216–219 each bind substrate; that span reads TRYE.

The protein belongs to the class I-like SAM-binding methyltransferase superfamily. TrmB family.

The catalysed reaction is guanosine(46) in tRNA + S-adenosyl-L-methionine = N(7)-methylguanosine(46) in tRNA + S-adenosyl-L-homocysteine. Its pathway is tRNA modification; N(7)-methylguanine-tRNA biosynthesis. Catalyzes the formation of N(7)-methylguanine at position 46 (m7G46) in tRNA. In Novosphingobium aromaticivorans (strain ATCC 700278 / DSM 12444 / CCUG 56034 / CIP 105152 / NBRC 16084 / F199), this protein is tRNA (guanine-N(7)-)-methyltransferase.